The chain runs to 521 residues: uncharacterized protein (521 aa).

The interval Met1–Lys25 is disordered. 6 helical membrane passes run Gly68 to Leu88, Val114 to Val134, Val160 to Gly180, Val192 to Leu212, Ala290 to Trp310, and Leu399 to Ile419.

It is found in the cell membrane. This is an uncharacterized protein from Mycobacterium bovis (strain ATCC BAA-935 / AF2122/97).